The following is a 536-amino-acid chain: Aminopeptidase (536 aa).

The first 24 residues, Met-1–Ala-24, serve as a signal peptide directing secretion. Residues Ala-152–Ser-255 form the PA domain. Residue Thr-196 is modified to Phosphothreonine. His-296 and Asp-308 together coordinate Zn(2+). Glu-340 (proton acceptor) is an active-site residue. Zn(2+) contacts are provided by Glu-341, Asp-369, and His-467. Cys-465 and Cys-470 are joined by a disulfide.

Belongs to the peptidase M28 family. M28A subfamily. Requires Zn(2+) as cofactor.

The protein resides in the secreted. It catalyses the reaction Release of an N-terminal amino acid, Xaa-|-Yaa-, in which Xaa is preferably Leu, but may be other amino acids including Pro although not Arg or Lys, and Yaa may be Pro. Amino acid amides and methyl esters are also readily hydrolyzed, but rates on arylamides are exceedingly low.. Its function is as follows. A secreted aminopeptidase. Acts on free N-terminal amino groups with a very strong preference for Leu in the first position. This is Aminopeptidase from Pseudomonas aeruginosa (strain UCBPP-PA14).